Reading from the N-terminus, the 300-residue chain is 7-methylguanosine phosphate-specific 5'-nucleotidase (300 aa).

Asp-41 functions as the Nucleophile in the catalytic mechanism. 2 residues coordinate Mg(2+): Asp-41 and Asp-43. The Proton donor role is filled by Asp-43. Position 88 (Glu-88) interacts with CMP. Glu-88 is a N(7)-methyl-GMP binding site. Residues 156–157 (SA) and Lys-205 each bind substrate. Asp-230 is a binding site for Mg(2+). Lys-256 carries the N6-acetyllysine modification.

It belongs to the pyrimidine 5'-nucleotidase family. As to quaternary structure, monomer.

The protein resides in the cytoplasm. It catalyses the reaction N(7)-methyl-GMP + H2O = N(7)-methylguanosine + phosphate. The enzyme catalyses CMP + H2O = cytidine + phosphate. It carries out the reaction a ribonucleoside 5'-phosphate + H2O = a ribonucleoside + phosphate. Specifically hydrolyzes 7-methylguanosine monophosphate (m(7)GMP) to 7-methylguanosine and inorganic phosphate. The specific activity for m(7)GMP may protect cells against undesired salvage of m(7)GMP and its incorporation into nucleic acids. Also has weak activity for CMP. UMP and purine nucleotides are poor substrates. In Mus musculus (Mouse), this protein is 7-methylguanosine phosphate-specific 5'-nucleotidase (Nt5c3b).